Reading from the N-terminus, the 119-residue chain is Large ribosomal subunit protein bL19 (119 aa).

Belongs to the bacterial ribosomal protein bL19 family.

In terms of biological role, this protein is located at the 30S-50S ribosomal subunit interface and may play a role in the structure and function of the aminoacyl-tRNA binding site. The polypeptide is Large ribosomal subunit protein bL19 (Pseudarthrobacter chlorophenolicus (strain ATCC 700700 / DSM 12829 / CIP 107037 / JCM 12360 / KCTC 9906 / NCIMB 13794 / A6) (Arthrobacter chlorophenolicus)).